Reading from the N-terminus, the 219-residue chain is Cytidylate kinase (219 aa).

ATP is bound at residue 9 to 17 (GPAGSGKTT).

Belongs to the cytidylate kinase family. Type 1 subfamily.

Its subcellular location is the cytoplasm. The catalysed reaction is CMP + ATP = CDP + ADP. It carries out the reaction dCMP + ATP = dCDP + ADP. This is Cytidylate kinase from Fervidobacterium nodosum (strain ATCC 35602 / DSM 5306 / Rt17-B1).